A 341-amino-acid chain; its full sequence is MLAARFASRAFPRTRLYSTAPKRSLKELVTELRSQADVSPIQAGQALKASDMDVSKALLWLEKQRTQSAVKKAAKVADRTANEGLIGTTVLSSGVANGRRVGVRAAMVELNCETDFVARNELFANLLEDITHTAAFISEPANAETFMQPFSMETLQNAPLLSQTKPSQNGKATVSEAMRDLTGRVGEKISLRRALTVVRDPFTSSQPDLALRVAARVHQSVFNPTQGRIGSLALLALKSKRLSEAIASQTFQDDLDKLCQALGRQVIGFPTTCIRSPPGTTDEGALYDQPFSMFIGPGNDQSVGAFLQSWAQERSLVNKDEEQSAGVEVLEFAKWTVGDVV.

The N-terminal 17 residues, 1–17, are a transit peptide targeting the mitochondrion; that stretch reads MLAARFASRAFPRTRLY.

It belongs to the EF-Ts family.

The protein resides in the mitochondrion. Associates with the EF-Tu.GDP complex and induces the exchange of GDP to GTP. It remains bound to the aminoacyl-tRNA.EF-Tu.GTP complex up to the GTP hydrolysis stage on the ribosome. In Postia placenta (strain ATCC 44394 / Madison 698-R) (Brown rot fungus), this protein is Elongation factor Ts, mitochondrial 2.